The following is a 376-amino-acid chain: Heme chaperone HemW (376 aa).

The Radical SAM core domain maps to 1–233; it reads MFTLPPISLY…DKLLKKAGYK (233 aa). Y10 contributes to the S-adenosyl-L-methionine binding site. 3 residues coordinate [4Fe-4S] cluster: C16, C20, and C23. S-adenosyl-L-methionine is bound by residues G66, 67-68, E99, Q126, R138, and D162; that span reads GT.

It belongs to the anaerobic coproporphyrinogen-III oxidase family. HemW subfamily. It depends on [4Fe-4S] cluster as a cofactor.

Its subcellular location is the cytoplasm. Its function is as follows. Probably acts as a heme chaperone, transferring heme to an unknown acceptor. Binds one molecule of heme per monomer, possibly covalently. Binds 1 [4Fe-4S] cluster. The cluster is coordinated with 3 cysteines and an exchangeable S-adenosyl-L-methionine. This is Heme chaperone HemW from Buchnera aphidicola subsp. Acyrthosiphon pisum (strain APS) (Acyrthosiphon pisum symbiotic bacterium).